The following is a 54-amino-acid chain: UPF0391 membrane protein Bpet1858 (54 aa).

The next 2 helical transmembrane spans lie at 5–25 (AVVF…GIAA) and 27–47 (AAGI…LSIL).

This sequence belongs to the UPF0391 family.

It localises to the cell membrane. The sequence is that of UPF0391 membrane protein Bpet1858 from Bordetella petrii (strain ATCC BAA-461 / DSM 12804 / CCUG 43448).